A 227-amino-acid chain; its full sequence is Orotate phosphoribosyltransferase (227 aa).

Lys-51, Arg-119, Lys-120, and Lys-123 together coordinate 5-phospho-alpha-D-ribose 1-diphosphate. Orotate contacts are provided by Thr-149 and Arg-177.

It belongs to the purine/pyrimidine phosphoribosyltransferase family. PyrE subfamily. Homodimer. In terms of tissue distribution, expressed in body wall muscles, spermatheca and vulva muscles.

It carries out the reaction orotidine 5'-phosphate + diphosphate = orotate + 5-phospho-alpha-D-ribose 1-diphosphate. The enzyme catalyses UMP + diphosphate = 5-phospho-alpha-D-ribose 1-diphosphate + uracil. It functions in the pathway pyrimidine metabolism; UMP biosynthesis via de novo pathway; UMP from orotate: step 1/2. It participates in pyrimidine metabolism; UMP biosynthesis via salvage pathway; UMP from uracil: step 1/1. Phosphoribosyltransferase which catalyzes the formation of UMP from uracil in vitro and thus may be involved in UMP biosynthesis via the salvage pathway. May also participate in the first step of UMP synthesis by catalyzing the formation of orotidine 5'-phosphate, a UMP precursor, from orotate. The chain is Orotate phosphoribosyltransferase from Caenorhabditis elegans.